The sequence spans 309 residues: Uracil phosphoribosyltransferase homolog (309 aa).

The interval 1–41 (MATELQCPDSMPCHNQQVNSASTPSPEQLRPGDPILDHAGG) is disordered. Residues 13–26 (CHNQQVNSASTPSP) are compositionally biased toward polar residues. Ser-25 is modified (phosphoserine). GTP contacts are provided by residues Arg-133, Arg-142, and 176-179 (EKGN). 5-phospho-alpha-D-ribose 1-diphosphate is bound at residue Arg-186. Arg-203 and Arg-232 together coordinate GTP. 238–246 (YPILSTGNT) lines the 5-phospho-alpha-D-ribose 1-diphosphate pocket. Residue 299-301 (THF) participates in uracil binding.

Belongs to the UPRTase family.

It is found in the cytoplasm. The protein resides in the nucleus. The protein is Uracil phosphoribosyltransferase homolog (UPRT) of Macaca fascicularis (Crab-eating macaque).